We begin with the raw amino-acid sequence, 306 residues long: Pantothenate kinase (306 aa).

Position 90–97 (90–97 (GSVAVGKS)) interacts with ATP.

Belongs to the prokaryotic pantothenate kinase family.

It localises to the cytoplasm. The enzyme catalyses (R)-pantothenate + ATP = (R)-4'-phosphopantothenate + ADP + H(+). The protein operates within cofactor biosynthesis; coenzyme A biosynthesis; CoA from (R)-pantothenate: step 1/5. The polypeptide is Pantothenate kinase (Lactococcus lactis subsp. cremoris (strain MG1363)).